Reading from the N-terminus, the 179-residue chain is ADP-ribosylation factor-like protein 5A (179 aa).

Glycine 2 is lipidated: N-myristoyl glycine. Residues 23–30, 66–70, 125–128, and alanine 159 each bind GTP; these read GLDNAGKT, DIGGQ, and NKQD.

This sequence belongs to the small GTPase superfamily. Arf family.

Functionally, lacks ADP-ribosylation enhancing activity. This is ADP-ribosylation factor-like protein 5A (Arl5a) from Mus musculus (Mouse).